The sequence spans 249 residues: MSVKKQLERLSELGAYYHKNGWMPGTAGNLSIRIPEESGFWVSGSGLDKDLLNKRNFLYVDLESGKPVDSKNVKATKGLKPSAETSIHRAVYRALDEVGCGLHVHTLESNLICANTSKNEPIALFELPAIEILKAYGIWEENPKVYVPIIYNFPNVQDISDCLEKYLKEYRPHVPFCIIEKHGITVWGKDAVQANRNLEATDFILKYMTSWKSFSYSGEPRKLSVSDVLEQDRREIFSVEFPVYPATFY.

Zn(2+) contacts are provided by His103 and His105.

The protein belongs to the aldolase class II family. MtnB subfamily. It depends on Zn(2+) as a cofactor.

The enzyme catalyses 5-(methylsulfanyl)-D-ribulose 1-phosphate = 5-methylsulfanyl-2,3-dioxopentyl phosphate + H2O. It participates in amino-acid biosynthesis; L-methionine biosynthesis via salvage pathway; L-methionine from S-methyl-5-thio-alpha-D-ribose 1-phosphate: step 2/6. Functionally, catalyzes the dehydration of methylthioribulose-1-phosphate (MTRu-1-P) into 2,3-diketo-5-methylthiopentyl-1-phosphate (DK-MTP-1-P). This is Methylthioribulose-1-phosphate dehydratase from Leptospira interrogans serogroup Icterohaemorrhagiae serovar copenhageni (strain Fiocruz L1-130).